Reading from the N-terminus, the 453-residue chain is GTPase Der (453 aa).

2 consecutive EngA-type G domains span residues P3–K167 and I187–K360. GTP is bound by residues G9 to S16, D57 to L61, N119 to D122, G193 to S200, D240 to A244, and N305 to D308. A KH-like domain is found at R361–E445.

The protein belongs to the TRAFAC class TrmE-Era-EngA-EngB-Septin-like GTPase superfamily. EngA (Der) GTPase family. Associates with the 50S ribosomal subunit.

In terms of biological role, GTPase that plays an essential role in the late steps of ribosome biogenesis. The sequence is that of GTPase Der from Buchnera aphidicola subsp. Acyrthosiphon pisum (strain 5A).